The following is a 117-amino-acid chain: Immunoglobulin heavy variable 1-69-2 (117 aa).

The N-terminal stretch at 1–19 (MDCTWRILLLVAAATGTHA) is a signal peptide. Residues 20–44 (EVQLVQSGAEVKKPGATVKISCKVS) form a framework-1 region. The Ig-like domain occupies 20 to 117 (EVQLVQSGAE…EDTAVYYCAT (98 aa)). A disulfide bridge connects residues C41 and C115. Residues 45–52 (GYTFTDYY) form a complementarity-determining-1 region. A framework-2 region spans residues 53 to 69 (MHWVQQAPGKGLEWMGL). The tract at residues 70-77 (VDPEDGET) is complementarity-determining-2. Residues 78–115 (IYAEKFQGRVTITADTSTDTAYMELSSLRSEDTAVYYC) are framework-3. Residues 116-117 (AT) form a complementarity-determining-3 region.

As to quaternary structure, immunoglobulins are composed of two identical heavy chains and two identical light chains; disulfide-linked.

The protein localises to the secreted. It is found in the cell membrane. In terms of biological role, v region of the variable domain of immunoglobulin heavy chains that participates in the antigen recognition. Immunoglobulins, also known as antibodies, are membrane-bound or secreted glycoproteins produced by B lymphocytes. In the recognition phase of humoral immunity, the membrane-bound immunoglobulins serve as receptors which, upon binding of a specific antigen, trigger the clonal expansion and differentiation of B lymphocytes into immunoglobulins-secreting plasma cells. Secreted immunoglobulins mediate the effector phase of humoral immunity, which results in the elimination of bound antigens. The antigen binding site is formed by the variable domain of one heavy chain, together with that of its associated light chain. Thus, each immunoglobulin has two antigen binding sites with remarkable affinity for a particular antigen. The variable domains are assembled by a process called V-(D)-J rearrangement and can then be subjected to somatic hypermutations which, after exposure to antigen and selection, allow affinity maturation for a particular antigen. The chain is Immunoglobulin heavy variable 1-69-2 from Homo sapiens (Human).